A 374-amino-acid polypeptide reads, in one-letter code: Alcohol dehydrogenase class-3 (374 aa).

Ser-2 bears the N-acetylserine mark. Zn(2+) contacts are provided by Cys-45, His-67, Cys-97, Cys-100, Cys-103, Cys-111, and Cys-174. Lys-233 carries the post-translational modification N6-succinyllysine. Residue Ser-247 is modified to Phosphoserine. Residue Lys-315 is modified to N6-succinyllysine. Ser-324 and Ser-351 each carry phosphoserine.

This sequence belongs to the zinc-containing alcohol dehydrogenase family. Class-III subfamily. Homodimer. The cofactor is Zn(2+).

It is found in the cytoplasm. The catalysed reaction is a primary alcohol + NAD(+) = an aldehyde + NADH + H(+). It catalyses the reaction a secondary alcohol + NAD(+) = a ketone + NADH + H(+). It carries out the reaction S-(hydroxymethyl)glutathione + NADP(+) = S-formylglutathione + NADPH + H(+). The enzyme catalyses S-(hydroxymethyl)glutathione + NAD(+) = S-formylglutathione + NADH + H(+). The catalysed reaction is 20-oxo-(5Z,8Z,11Z,14Z)-eicosatetraenoate + NAD(+) + H2O = (5Z,8Z,11Z,14Z)-eicosatetraenedioate + NADH + 2 H(+). It catalyses the reaction 20-hydroxy-(5Z,8Z,11Z,14Z)-eicosatetraenoate + NAD(+) = 20-oxo-(5Z,8Z,11Z,14Z)-eicosatetraenoate + NADH + H(+). It carries out the reaction S-nitrosoglutathione + NADH + H(+) = S-(hydroxysulfenamide)glutathione + NAD(+). Catalyzes the oxidation of long-chain primary alcohols and the oxidation of S-(hydroxymethyl) glutathione. Also oxidizes long chain omega-hydroxy fatty acids, such as 20-HETE, producing both the intermediate aldehyde, 20-oxoarachidonate and the end product, a dicarboxylic acid, (5Z,8Z,11Z,14Z)-eicosatetraenedioate. Class-III ADH is remarkably ineffective in oxidizing ethanol. Required for clearance of cellular formaldehyde, a cytotoxic and carcinogenic metabolite that induces DNA damage. Also acts as a S-nitroso-glutathione reductase by catalyzing the NADH-dependent reduction of S-nitrosoglutathione, thereby regulating protein S-nitrosylation. The chain is Alcohol dehydrogenase class-3 from Equus caballus (Horse).